We begin with the raw amino-acid sequence, 87 residues long: Phosphoribosyl-ATP pyrophosphatase (87 aa).

Belongs to the PRA-PH family.

It localises to the cytoplasm. It catalyses the reaction 1-(5-phospho-beta-D-ribosyl)-ATP + H2O = 1-(5-phospho-beta-D-ribosyl)-5'-AMP + diphosphate + H(+). It participates in amino-acid biosynthesis; L-histidine biosynthesis; L-histidine from 5-phospho-alpha-D-ribose 1-diphosphate: step 2/9. This is Phosphoribosyl-ATP pyrophosphatase from Arthrobacter sp. (strain FB24).